The sequence spans 881 residues: Envelope glycoprotein gp160 (881 aa).

The N-terminal stretch at 1-19 is a signal peptide; that stretch reads MGCLGNQLLIAILLLSVYG. The Extracellular portion of the chain corresponds to 20–696; the sequence is IYCTQYVTVF…ASWIKYIQYG (677 aa). The N-linked (GlcNAc...) asparagine; by host glycan is linked to asparagine 37. Residues cysteine 44 and cysteine 57 are joined by a disulfide bond. Residues asparagine 70, asparagine 114, asparagine 148, asparagine 158, asparagine 186, asparagine 200, asparagine 204, asparagine 214, asparagine 246, asparagine 249, asparagine 280, asparagine 286, asparagine 297, asparagine 308, asparagine 318, asparagine 373, and asparagine 379 are each glycosylated (N-linked (GlcNAc...) asparagine; by host). Cystine bridges form between cysteine 101-cysteine 222, cysteine 108-cysteine 213, cysteine 113-cysteine 170, cysteine 235-cysteine 265, and cysteine 245-cysteine 257. Residues 113-169 are V1; sequence CNKSETDRWGLTKSSTTITTAAPTSAPVSEKIDMVNETSSCIAQNNCTGLEQEQMIS. Residues 170-213 form a V2 region; it reads CKFTMTGLKRDKTKEYNETWYSTDLVCEQGNSTDNESRCYMNHC. Positions 313 to 345 are V3; sequence CRRPGNKTVLPVTIMSGLVFHSQPINDRPKQAW. A disulfide bridge connects residues cysteine 313 and cysteine 346. 2 disulfide bridges follow: cysteine 397/cysteine 461 and cysteine 404/cysteine 434. The tract at residues 404 to 434 is V4; sequence CKMNWFLNWVEDRDVTTQRPKERHRRNYVPC. N-linked (GlcNAc...) asparagine; by host glycosylation is found at asparagine 462 and asparagine 478. The V5 stretch occupies residues 477–484; the sequence is GNQTSITM. Positions 528-548 are fusion peptide; that stretch reads GVFVLGFLGFLATAGSAMGAA. Positions 591 to 607 are immunosuppression; sequence LQTRVTAIEKYLKDQAQ. Residues asparagine 627, asparagine 636, and asparagine 652 are each glycosylated (N-linked (GlcNAc...) asparagine; by host). Residues 636 to 668 adopt a coiled-coil conformation; the sequence is NDTWQEWERKVDFLEENITALLEEAQIQQEKNM. Residues 673-694 are MPER; binding to GalCer; that stretch reads KLNSWDVFGNWFDLASWIKYIQ. The chain crosses the membrane as a helical span at residues 697–717; sequence IYVVVGVILLRIVIYIVQMLA. Over 718–881 the chain is Cytoplasmic; the sequence is KLRQGYRPVF…IRQGLELTLL (164 aa). Positions 723–726 match the YXXV motif; contains endocytosis signal motif; the sequence is YRPV. The segment at 737–761 is disordered; sequence THTQQDPALPTREGKEGDGGEGGGN. A lipid anchor (S-palmitoyl cysteine; by host) is attached at cysteine 789. A Di-leucine internalization motif motif is present at residues 880–881; that stretch reads LL.

The mature envelope protein (Env) consists of a homotrimer of non-covalently associated gp120-gp41 heterodimers. The resulting complex protrudes from the virus surface as a spike. Interacts with host CD4 and CCR5. Gp120 also interacts with the C-type lectins CD209/DC-SIGN and CLEC4M/DC-SIGNR (collectively referred to as DC-SIGN(R)). As to quaternary structure, the mature envelope protein (Env) consists of a homotrimer of non-covalently associated gp120-gp41 heterodimers. The resulting complex protrudes from the virus surface as a spike. Specific enzymatic cleavages in vivo yield mature proteins. Envelope glycoproteins are synthesized as an inactive precursor that is heavily N-glycosylated and processed likely by host cell furin in the Golgi to yield the mature SU and TM proteins. The cleavage site between SU and TM requires the minimal sequence [KR]-X-[KR]-R. In terms of processing, palmitoylation of the transmembrane protein and of Env polyprotein (prior to its proteolytic cleavage) is essential for their association with host cell membrane lipid rafts. Palmitoylation is therefore required for envelope trafficking to classical lipid rafts, but not for viral replication.

The protein localises to the virion membrane. It localises to the host cell membrane. The protein resides in the host endosome membrane. Its function is as follows. The surface protein gp120 (SU) attaches the virus to the host lymphoid cell by binding to the primary receptor CD4. This interaction induces a structural rearrangement creating a high affinity binding site for a chemokine coreceptor like CCR5. This peculiar 2 stage receptor-interaction strategy allows gp120 to maintain the highly conserved coreceptor-binding site in a cryptic conformation, protected from neutralizing antibodies. These changes are transmitted to the transmembrane protein gp41 and are thought to activate its fusogenic potential by unmasking its fusion peptide. Functionally, surface protein gp120 (SU) may target the virus to gut-associated lymphoid tissue (GALT) by binding host ITGA4/ITGB7 (alpha-4/beta-7 integrins), a complex that mediates T-cell migration to the GALT. Interaction between gp120 and ITGA4/ITGB7 would allow the virus to enter GALT early in the infection, infecting and killing most of GALT's resting CD4+ T-cells. This T-cell depletion is believed to be the major insult to the host immune system leading to AIDS. In terms of biological role, the surface protein gp120 is a ligand for CD209/DC-SIGN and CLEC4M/DC-SIGNR, which are respectively found on dendritic cells (DCs), and on endothelial cells of liver sinusoids and lymph node sinuses. These interactions allow capture of viral particles at mucosal surfaces by these cells and subsequent transmission to permissive cells. DCs are professional antigen presenting cells, critical for host immunity by inducing specific immune responses against a broad variety of pathogens. They act as sentinels in various tissues where they take up antigen, process it, and present it to T-cells following migration to lymphoid organs. SIV subverts the migration properties of dendritic cells to gain access to CD4+ T-cells in lymph nodes. Virus transmission to permissive T-cells occurs either in trans (without DCs infection, through viral capture and transmission), or in cis (following DCs productive infection, through the usual CD4-gp120 interaction), thereby inducing a robust infection. In trans infection, bound virions remain infectious over days and it is proposed that they are not degraded, but protected in non-lysosomal acidic organelles within the DCs close to the cell membrane thus contributing to the viral infectious potential during DCs' migration from the periphery to the lymphoid tissues. On arrival at lymphoid tissues, intact virions recycle back to DCs' cell surface allowing virus transmission to CD4+ T-cells. Virion capture also seems to lead to MHC-II-restricted viral antigen presentation, and probably to the activation of SIV-specific CD4+ cells. The transmembrane protein gp41 (TM) acts as a class I viral fusion protein. Under the current model, the protein has at least 3 conformational states: pre-fusion native state, pre-hairpin intermediate state, and post-fusion hairpin state. During fusion of viral and target intracellular membranes, the coiled coil regions (heptad repeats) assume a trimer-of-hairpins structure, positioning the fusion peptide in close proximity to the C-terminal region of the ectodomain. The formation of this structure appears to drive apposition and subsequent fusion of viral and target cell membranes. Complete fusion occurs in host cell endosomes. The virus undergoes clathrin-dependent internalization long before endosomal fusion, thus minimizing the surface exposure of conserved viral epitopes during fusion and reducing the efficacy of inhibitors targeting these epitopes. Membranes fusion leads to delivery of the nucleocapsid into the cytoplasm. Its function is as follows. The envelope glycoprotein gp160 precursor down-modulates cell surface CD4 antigen by interacting with it in the endoplasmic reticulum and blocking its transport to the cell surface. Functionally, the gp120-gp41 heterodimer allows rapid transcytosis of the virus through CD4 negative cells such as simple epithelial monolayers of the intestinal, rectal and endocervical epithelial barriers. Both gp120 and gp41 specifically recognize glycosphingolipids galactosyl-ceramide (GalCer) or 3' sulfo-galactosyl-ceramide (GalS) present in the lipid rafts structures of epithelial cells. Binding to these alternative receptors allows the rapid transcytosis of the virus through the epithelial cells. This transcytotic vesicle-mediated transport of virions from the apical side to the basolateral side of the epithelial cells does not involve infection of the cells themselves. This Cercopithecidae (Old World monkeys) protein is Envelope glycoprotein gp160 (env).